The chain runs to 617 residues: Autophagy-related protein 20 (617 aa).

The tract at residues 1–83 (MWNDEDNNPY…KRKPGGYDSR (83 aa)) is disordered. Positions 20–31 (QSSSINPTSPST) are enriched in low complexity. The span at 48-58 (DNEHNHGVIHD) shows a compositional bias: basic and acidic residues. Acidic residues predominate over residues 59–68 (DSDDDDEDLT). A PX domain is found at 89–209 (YENPKLSILI…RFFDPNASWS (121 aa)). A 1,2-diacyl-sn-glycero-3-phospho-(1D-myo-inositol-3-phosphate) contacts are provided by R126, S128, K152, and R175. Positions 403 to 440 (QQDLTTEELSKKRALLDQLEQSEAEARRIENYLSSSQQ) form a coiled coil. The disordered stretch occupies residues 434–516 (YLSSSQQISP…SGNSITNKIF (83 aa)). Basic and acidic residues predominate over residues 454–463 (PPSHQRRDGS). Positions 480–500 (DFSSHTPSASQGLPERSTSVP) are enriched in polar residues.

The protein belongs to the sorting nexin family. Forms a complex with SNX4/ATG24 and ATG17.

The protein localises to the endosome membrane. The protein resides in the preautophagosomal structure membrane. Its function is as follows. Required for cytoplasm to vacuole transport (Cvt), pexophagy and mitophagy. Also involved in endoplasmic reticulum-specific autophagic process and is essential for the survival of cells subjected to severe ER stress. Functions in protein retrieval from the endocytic pathway. Required for proper sorting of the v-SNARE protein SNC1. Autophagy is required for proper vegetative growth, asexual/sexual reproduction, and full virulence. Autophagy is particularly involved in the biosynthesis of deoxynivalenol (DON), an important virulence determinant. This is Autophagy-related protein 20 from Gibberella zeae (strain ATCC MYA-4620 / CBS 123657 / FGSC 9075 / NRRL 31084 / PH-1) (Wheat head blight fungus).